Reading from the N-terminus, the 427-residue chain is MKTQIQAIHAREILDSRGNPTVEVDVTLECGAMGRASVPSGASTGAHEAVELRDKDTQRYSGKGVLKAVSNVNTEILESLRGMNAIDQEQIDHLMIKLDGTSDKSRLGGNAILGVSLAVARAAASALNLPLFQYLGGEQAARMPVPMFNILNGGVHANWQGPDFQEFMIAPTGAGSFKEALRWGSEVYHELKAVLKDAGYSTAVGDEGGFAPALKKNSDAIELIIKAIERAGYTPGSQIEIAIDPASSGFYENGLYHLRSEGRKVDAQELINLYSSWVDKYPIAVLEDGLAEDDWSGWKLLNAALGDRIELVGDDLFVTNVERIQRGITENVANAVLIKPNQIGTLTETKAAIEMAYGANWGAMVSHRSGETVDSSIADLTVAMGTGHLKTGAPCRGERVEKYNQFLRIEEDLGSRAFYAGHDAFVR.

Position 165 (glutamine 165) interacts with (2R)-2-phosphoglycerate. Glutamate 207 functions as the Proton donor in the catalytic mechanism. Aspartate 244, glutamate 287, and aspartate 314 together coordinate Mg(2+). The (2R)-2-phosphoglycerate site is built by lysine 339, arginine 368, serine 369, and lysine 390. Residue lysine 339 is the Proton acceptor of the active site.

This sequence belongs to the enolase family. Component of the RNA degradosome, a multiprotein complex involved in RNA processing and mRNA degradation. Requires Mg(2+) as cofactor.

The protein localises to the cytoplasm. It is found in the secreted. The protein resides in the cell surface. It catalyses the reaction (2R)-2-phosphoglycerate = phosphoenolpyruvate + H2O. Its pathway is carbohydrate degradation; glycolysis; pyruvate from D-glyceraldehyde 3-phosphate: step 4/5. Its function is as follows. Catalyzes the reversible conversion of 2-phosphoglycerate (2-PG) into phosphoenolpyruvate (PEP). It is essential for the degradation of carbohydrates via glycolysis. This Pseudomonas syringae pv. syringae (strain B728a) protein is Enolase 2.